Reading from the N-terminus, the 363-residue chain is Spermidine/putrescine import ATP-binding protein PotA (363 aa).

Positions 9–239 (IDVRNAVKRY…PANRFVADFI (231 aa)) constitute an ABC transporter domain. 41–48 (GPSGCGKT) is an ATP binding site.

This sequence belongs to the ABC transporter superfamily. Spermidine/putrescine importer (TC 3.A.1.11.1) family. The complex is composed of two ATP-binding proteins (PotA), two transmembrane proteins (PotB and PotC) and a solute-binding protein (PotD).

The protein resides in the cell inner membrane. The catalysed reaction is ATP + H2O + polyamine-[polyamine-binding protein]Side 1 = ADP + phosphate + polyamineSide 2 + [polyamine-binding protein]Side 1.. Its function is as follows. Part of the ABC transporter complex PotABCD involved in spermidine/putrescine import. Responsible for energy coupling to the transport system. This Roseobacter denitrificans (strain ATCC 33942 / OCh 114) (Erythrobacter sp. (strain OCh 114)) protein is Spermidine/putrescine import ATP-binding protein PotA.